The primary structure comprises 237 residues: Ribose-5-phosphate isomerase A (237 aa).

Substrate-binding positions include 33 to 36 (TGST), 90 to 93 (DGAD), and 103 to 106 (KGGG). E112 functions as the Proton acceptor in the catalytic mechanism. Position 130 (K130) interacts with substrate.

The protein belongs to the ribose 5-phosphate isomerase family. In terms of assembly, homodimer.

The catalysed reaction is aldehydo-D-ribose 5-phosphate = D-ribulose 5-phosphate. Its pathway is carbohydrate degradation; pentose phosphate pathway; D-ribose 5-phosphate from D-ribulose 5-phosphate (non-oxidative stage): step 1/1. Functionally, catalyzes the reversible conversion of ribose-5-phosphate to ribulose 5-phosphate. This is Ribose-5-phosphate isomerase A from Trichodesmium erythraeum (strain IMS101).